The following is a 178-amino-acid chain: CASP-like protein 2A2 (178 aa).

Topologically, residues 1-22 (MDKTDQTAIDGSALELNRTEKT) are cytoplasmic. The helical transmembrane segment at 23-43 (VEAVLRVASMALSITGLVIMI) threads the bilayer. Residues 44–69 (KNSISNDFGSLSYSNLGAFMYLVGAN) are Extracellular-facing. Residues 70–90 (GVCAAYSLLSALAILALPCPI) form a helical membrane-spanning segment. Topologically, residues 91-96 (SKVQVR) are cytoplasmic. The helical transmembrane segment at 97–117 (TLFLLDQVVTYVVLAAGAVSA) threads the bilayer. At 118 to 145 (ETVYLAYYGNIPITWSSACDSYGIFCHK) the chain is on the extracellular side. Residues 146–166 (ALISVVFTFVVSLLYMLLSLI) form a helical membrane-spanning segment. The Cytoplasmic segment spans residues 167–178 (SSYRLFSRFEAP).

This sequence belongs to the Casparian strip membrane proteins (CASP) family. As to quaternary structure, homodimer and heterodimers.

Its subcellular location is the cell membrane. This Arabidopsis lyrata subsp. lyrata (Lyre-leaved rock-cress) protein is CASP-like protein 2A2.